We begin with the raw amino-acid sequence, 801 residues long: Cadherin-20 (801 aa).

A signal peptide spans 1-34; that stretch reads MWTTGRMSNAKSWLGLGTSLYFWALMDLTATVLS. Positions 35 to 59 are excised as a propeptide; sequence STPMPEVELETLFSGRSQSHQRSKR. Residues 60-619 lie on the Extracellular side of the membrane; the sequence is SWVWNQFFVL…AYLLPVSLSR (560 aa). Cadherin domains are found at residues 61-165, 166-274, 275-389, 390-494, and 494-610; these read WVWN…EPKF, LDGP…PPRF, PQKH…PPVF, EPGF…APEF, and FPRF…SPEA. N-linked (GlcNAc...) asparagine glycosylation occurs at Asn-261. Asn-420, Asn-461, and Asn-542 each carry an N-linked (GlcNAc...) asparagine glycan. A helical membrane pass occupies residues 620–640; sequence GALIAILACIFVLLVLVLLIL. At 641-801 the chain is on the cytoplasmic side; sequence SMRRHRKQPY…GASEGPAPLW (161 aa).

In terms of tissue distribution, expressed in brain. Highest level of expression in the retina. In embryo it is synthesized by the forebrain, anterior neural ridge, developing visual system, primitive external granular layer of the cerebellum and a subset of neural crest cells likely to develop into melanoblasts.

The protein localises to the cell membrane. In terms of biological role, cadherins are calcium-dependent cell adhesion proteins. They preferentially interact with themselves in a homophilic manner in connecting cells; cadherins may thus contribute to the sorting of heterogeneous cell types. This Mus musculus (Mouse) protein is Cadherin-20 (Cdh20).